We begin with the raw amino-acid sequence, 69 residues long: uncharacterized protein (69 aa).

This is an uncharacterized protein from Homo sapiens (Human).